Here is a 376-residue protein sequence, read N- to C-terminus: Na(+)/H(+) antiporter NhaA (376 aa).

Transmembrane regions (helical) follow at residues 8–28 (FLAT…AAML), 49–69 (LSLL…LVGL), 87–107 (ILPC…YLAF), 117–137 (GWAI…ALLG), 140–160 (APAS…MGAV), 162–182 (IIAL…AIVI), 209–229 (LAVL…ALAI), 248–268 (PWVA…VSFA), 270–290 (IGAE…LFLG), 321–341 (GVAL…GLAF), and 349–369 (EVKI…YALL).

It belongs to the NhaA Na(+)/H(+) (TC 2.A.33) antiporter family.

The protein localises to the cell inner membrane. It carries out the reaction Na(+)(in) + 2 H(+)(out) = Na(+)(out) + 2 H(+)(in). In terms of biological role, na(+)/H(+) antiporter that extrudes sodium in exchange for external protons. This Rhizorhabdus wittichii (strain DSM 6014 / CCUG 31198 / JCM 15750 / NBRC 105917 / EY 4224 / RW1) (Sphingomonas wittichii) protein is Na(+)/H(+) antiporter NhaA.